The sequence spans 507 residues: Cytochrome P450 4X1 (507 aa).

The chain crosses the membrane as a helical span at residues 14–34 (LHLALVFCLALVLMQAMKLYL). Residue C452 participates in heme binding.

This sequence belongs to the cytochrome P450 family. Heme is required as a cofactor. As to expression, expressed in brain and aorta. In the brain, expressed in the Purkinje cells of the cerebellum, pyramidal neurons in the dentate gyrus of the hippocampus, cortical forebrain neurons and those of brain stem nuclei (at protein level). In addition to neurons, also expressed in cerebral vascular endothelial cells (at protein level). Also expressed in epithelial cells of the choroid plexus (at protein level). Hardly detectable in heart, lung, kidney and spleen.

It is found in the endoplasmic reticulum membrane. Its subcellular location is the microsome membrane. It carries out the reaction N-(5Z,8Z,11Z,14Z-eicosatetraenoyl)-ethanolamine + reduced [NADPH--hemoprotein reductase] + O2 = N-(14,15-epoxy-5Z,8Z,11Z-eicosatrienoyl)-ethanolamine + oxidized [NADPH--hemoprotein reductase] + H2O + H(+). In terms of biological role, a cytochrome P450 monooxygenase that selectively catalyzes the epoxidation of the last double bond of the arachidonoyl moiety of anandamide, potentially modulating endocannabinoid signaling. Has no hydroxylase activity toward various fatty acids, steroids and prostaglandins. Mechanistically, uses molecular oxygen inserting one oxygen atom into a substrate, and reducing the second into a water molecule, with two electrons provided by NADPH via cytochrome P450 reductase (CPR; NADPH-ferrihemoprotein reductase). The sequence is that of Cytochrome P450 4X1 from Mus musculus (Mouse).